The primary structure comprises 284 residues: MKLDGYTRLAAVVANPIKHSISPFIHNRAFEATATNGAYVAWEIEASDLAETVANIRRYQMFGINLSMPYKEQVIPYLDKLSDEARLIGAVNTVVNENGNLIGYNTDGKGFFKCLPSFTISGKKMTLLGAGGAAKSILAQAILDGVSQISVFVRSVSMEKTRPYLDKLQEQTGFKVDLCALENVSELQARIAESDLLVNATSVGMDGQSSPVPENIVLPETLLVADIIYQPFETPFLKWARSQGNPAVNGLGMLLYQAAEAFQLWTGKEMPTEEIWQSLTEKYQ.

Shikimate contacts are provided by residues 20 to 22 and Ser-67; that span reads SIS. The Proton acceptor role is filled by Lys-71. Asp-83 serves as a coordination point for NADP(+). Shikimate is bound by residues Asn-92 and Asp-107. NADP(+) is bound by residues 129–133 and Ile-227; that span reads GAGGA. Tyr-229 is a binding site for shikimate. Gly-250 lines the NADP(+) pocket.

This sequence belongs to the shikimate dehydrogenase family. In terms of assembly, homodimer.

It catalyses the reaction shikimate + NADP(+) = 3-dehydroshikimate + NADPH + H(+). The protein operates within metabolic intermediate biosynthesis; chorismate biosynthesis; chorismate from D-erythrose 4-phosphate and phosphoenolpyruvate: step 4/7. In terms of biological role, involved in the biosynthesis of the chorismate, which leads to the biosynthesis of aromatic amino acids. Catalyzes the reversible NADPH linked reduction of 3-dehydroshikimate (DHSA) to yield shikimate (SA). The sequence is that of Shikimate dehydrogenase (NADP(+)) from Streptococcus pneumoniae (strain JJA).